Here is a 229-residue protein sequence, read N- to C-terminus: UPF0319 protein Sbal223_2728 (229 aa).

An N-terminal signal peptide occupies residues 1 to 21 (MKSLLPISSLLVLLGSASAFA).

This sequence belongs to the UPF0319 family.

The polypeptide is UPF0319 protein Sbal223_2728 (Shewanella baltica (strain OS223)).